Consider the following 487-residue polypeptide: Glutamyl-tRNA(Gln) amidotransferase subunit A (487 aa).

Catalysis depends on charge relay system residues Lys76 and Ser151. Ser175 functions as the Acyl-ester intermediate in the catalytic mechanism.

It belongs to the amidase family. GatA subfamily. As to quaternary structure, heterotrimer of A, B and C subunits.

It catalyses the reaction L-glutamyl-tRNA(Gln) + L-glutamine + ATP + H2O = L-glutaminyl-tRNA(Gln) + L-glutamate + ADP + phosphate + H(+). Functionally, allows the formation of correctly charged Gln-tRNA(Gln) through the transamidation of misacylated Glu-tRNA(Gln) in organisms which lack glutaminyl-tRNA synthetase. The reaction takes place in the presence of glutamine and ATP through an activated gamma-phospho-Glu-tRNA(Gln). This is Glutamyl-tRNA(Gln) amidotransferase subunit A from Azoarcus sp. (strain BH72).